A 229-amino-acid chain; its full sequence is Peroxiredoxin 1 (229 aa).

Residues 33–192 form the Thioredoxin domain; it reads LGPKNKAPDF…AFRTLKAFQF (160 aa). Cys78 (cysteine sulfenic acid (-SOH) intermediate) is an active-site residue.

It belongs to the peroxiredoxin family. AhpC/Prx1 subfamily. In terms of assembly, homodimer; disulfide-linked, upon oxidation.

The catalysed reaction is a hydroperoxide + [thioredoxin]-dithiol = an alcohol + [thioredoxin]-disulfide + H2O. In terms of biological role, thiol-specific peroxidase that catalyzes the reduction of hydrogen peroxide and organic hydroperoxides to water and alcohols, respectively. Plays a role in cell protection against oxidative stress by detoxifying peroxides and as sensor of hydrogen peroxide-mediated signaling events. This is Peroxiredoxin 1 (TSA1) from Brugia malayi (Filarial nematode worm).